Reading from the N-terminus, the 140-residue chain is MIDILKIKEALPHLYPMLLVDRVLEVSEDEIVALKNVTINEPFFNGHFPDYPVMPGVLIMEALAQTAGVLELSKEENKGKLVFYAGMDKVKFKKQVVPGDQLIMTAKFVKRRGTIAVVEAKAEVEGKLAASGTLTFAIGK.

H47 is an active-site residue.

This sequence belongs to the thioester dehydratase family. FabZ subfamily.

It is found in the cytoplasm. It catalyses the reaction a (3R)-hydroxyacyl-[ACP] = a (2E)-enoyl-[ACP] + H2O. Functionally, involved in unsaturated fatty acids biosynthesis. Catalyzes the dehydration of short chain beta-hydroxyacyl-ACPs and long chain saturated and unsaturated beta-hydroxyacyl-ACPs. The protein is 3-hydroxyacyl-[acyl-carrier-protein] dehydratase FabZ of Streptococcus suis (strain 98HAH33).